The following is a 734-amino-acid chain: Photosystem I P700 chlorophyll a apoprotein A2 (734 aa).

The next 8 membrane-spanning stretches (helical) occupy residues 46-69 (IFAS…FHVA), 135-158 (LYTG…FHLQ), 175-199 (LDHH…HVAI), 273-291 (IAHH…GHMY), 330-353 (LHFQ…QHMY), 369-395 (AALY…IFFI), 417-439 (AIIS…LYVH), and 517-535 (FLVH…LILV). The [4Fe-4S] cluster site is built by Cys-559 and Cys-568. The next 2 helical transmembrane spans lie at 575–596 (AFYL…YWHW) and 643–665 (LSVW…MFLI). 3 residues coordinate chlorophyll a: His-654, Met-662, and Tyr-670. A phylloquinone-binding site is contributed by Trp-671. A helical transmembrane segment spans residues 707-727 (LVGLAHFSVGYIFTYAAFLIA).

Belongs to the PsaA/PsaB family. As to quaternary structure, the PsaA/B heterodimer binds the P700 chlorophyll special pair and subsequent electron acceptors. PSI consists of a core antenna complex that captures photons, and an electron transfer chain that converts photonic excitation into a charge separation. The eukaryotic PSI reaction center is composed of at least 11 subunits. It depends on P700 is a chlorophyll a/chlorophyll a' dimer, A0 is one or more chlorophyll a, A1 is one or both phylloquinones and FX is a shared 4Fe-4S iron-sulfur center. as a cofactor.

It localises to the plastid. The protein resides in the chloroplast thylakoid membrane. It carries out the reaction reduced [plastocyanin] + hnu + oxidized [2Fe-2S]-[ferredoxin] = oxidized [plastocyanin] + reduced [2Fe-2S]-[ferredoxin]. Its function is as follows. PsaA and PsaB bind P700, the primary electron donor of photosystem I (PSI), as well as the electron acceptors A0, A1 and FX. PSI is a plastocyanin-ferredoxin oxidoreductase, converting photonic excitation into a charge separation, which transfers an electron from the donor P700 chlorophyll pair to the spectroscopically characterized acceptors A0, A1, FX, FA and FB in turn. Oxidized P700 is reduced on the lumenal side of the thylakoid membrane by plastocyanin. This is Photosystem I P700 chlorophyll a apoprotein A2 from Cycas taitungensis (Prince sago).